A 591-amino-acid polypeptide reads, in one-letter code: Aspartate--tRNA(Asp/Asn) ligase (591 aa).

E176 contacts L-aspartate. The segment at Q200–K203 is aspartate. R222 is a binding site for L-aspartate. Residues R222–E224 and Q231 contribute to the ATP site. An L-aspartate-binding site is contributed by H450. E484 is an ATP binding site. R491 is a binding site for L-aspartate. G536–R539 provides a ligand contact to ATP.

This sequence belongs to the class-II aminoacyl-tRNA synthetase family. Type 1 subfamily. Homodimer.

The protein localises to the cytoplasm. The enzyme catalyses tRNA(Asx) + L-aspartate + ATP = L-aspartyl-tRNA(Asx) + AMP + diphosphate. Functionally, aspartyl-tRNA synthetase with relaxed tRNA specificity since it is able to aspartylate not only its cognate tRNA(Asp) but also tRNA(Asn). Reaction proceeds in two steps: L-aspartate is first activated by ATP to form Asp-AMP and then transferred to the acceptor end of tRNA(Asp/Asn). This is Aspartate--tRNA(Asp/Asn) ligase from Bacillus anthracis (strain A0248).